The sequence spans 240 residues: Protein MGARP (240 aa).

Residues 1–40 (MYLRRAVSKTLALPLRAPPNPAPLGKDASLRRMSSNRFPG) lie on the Cytoplasmic side of the membrane. Residues 41 to 63 (SSGSNMIYYLVVGVTVSAGGYYA) form a helical; Anchor for type IV membrane protein membrane-spanning segment. The Mitochondrial intermembrane segment spans residues 64–240 (YKTVTSDQAK…VGSEAASAQG (177 aa)). The tract at residues 166–240 (RETTEVNPET…VGSEAASAQG (75 aa)) is disordered. Residues 170 to 181 (EVNPETTPEVTN) are compositionally biased toward low complexity. Positions 191 to 201 (DNDKDTTKNET) are enriched in basic and acidic residues. A compositionally biased stretch (acidic residues) spans 202-213 (SDEYAELEEENS). Residues 228–240 (EASVGSEAASAQG) are compositionally biased toward low complexity.

As to quaternary structure, interacts with RHOT1/Miro-1, TRAK1/OIP106 and TRAK2/GRIF1. Interacts with RHOT2/Miro-2. As to expression, expressed in the brain, adrenal gland and corneal endothelium (CE). Expressed in steroid-producing cells of the ovary and testis (at protein level). Expressed in steroid-producing cells of the ovary and testis. Weakly expressed in placenta. Expressed in corneal endothelial cells.

The protein resides in the mitochondrion. Its subcellular location is the mitochondrion outer membrane. It localises to the mitochondrion inner membrane. Its function is as follows. Plays a role in the trafficking of mitochondria along microtubules. Regulates the kinesin-mediated axonal transport of mitochondria to nerve terminals along microtubules during hypoxia. Participates in the translocation of TRAK2/GRIF1 from the cytoplasm to the mitochondrion. Also plays a role in steroidogenesis through maintenance of mitochondrial abundance and morphology. Plays an inhibitory role during neocortex development by regulating mitochondrial morphology, distribution and motility in neocortical neurons. This chain is Protein MGARP (MGARP), found in Homo sapiens (Human).